We begin with the raw amino-acid sequence, 198 residues long: Pyridoxal 5'-phosphate synthase subunit PdxT (198 aa).

50–52 (GES) contacts L-glutamine. The active-site Nucleophile is cysteine 82. Residues arginine 114 and 143–144 (IR) contribute to the L-glutamine site. Active-site charge relay system residues include histidine 179 and glutamate 181.

Belongs to the glutaminase PdxT/SNO family. In terms of assembly, in the presence of PdxS, forms a dodecamer of heterodimers. Only shows activity in the heterodimer.

The catalysed reaction is aldehydo-D-ribose 5-phosphate + D-glyceraldehyde 3-phosphate + L-glutamine = pyridoxal 5'-phosphate + L-glutamate + phosphate + 3 H2O + H(+). The enzyme catalyses L-glutamine + H2O = L-glutamate + NH4(+). It participates in cofactor biosynthesis; pyridoxal 5'-phosphate biosynthesis. Functionally, catalyzes the hydrolysis of glutamine to glutamate and ammonia as part of the biosynthesis of pyridoxal 5'-phosphate. The resulting ammonia molecule is channeled to the active site of PdxS. The chain is Pyridoxal 5'-phosphate synthase subunit PdxT from Metallosphaera sedula (strain ATCC 51363 / DSM 5348 / JCM 9185 / NBRC 15509 / TH2).